The primary structure comprises 236 residues: UPF0257 lipoprotein YnfC (236 aa).

Residues 1 to 16 (MKYKLLPCLLAIFLTG) form the signal peptide. A lipid anchor (N-palmitoyl cysteine) is attached at Cys-17. A lipid anchor (S-diacylglycerol cysteine) is attached at Cys-17.

This sequence belongs to the UPF0257 family.

The protein localises to the cell membrane. This is UPF0257 lipoprotein YnfC from Escherichia coli O7:K1 (strain IAI39 / ExPEC).